The primary structure comprises 131 residues: Large ribosomal subunit protein bL19c (131 aa).

It belongs to the bacterial ribosomal protein bL19 family.

It is found in the plastid. It localises to the cyanelle. Its function is as follows. This protein is located at the 30S-50S ribosomal subunit interface and may play a role in the structure and function of the aminoacyl-tRNA binding site. This chain is Large ribosomal subunit protein bL19c (rpl19), found in Cyanophora paradoxa.